The primary structure comprises 361 residues: Mannose-1-phosphate guanylyltransferase 1 (361 aa).

GDP-alpha-D-mannose is bound by residues leucine 6 and valine 7. Residues glycine 9, glycine 11, threonine 12, arginine 13, and lysine 23 each contribute to the diphosphate site. The GDP-alpha-D-mannose site is built by glycine 85, asparagine 109, aspartate 111, glycine 146, and asparagine 173.

The protein belongs to the transferase hexapeptide repeat family. In terms of assembly, interacts in vitro with CSN5A and CSN5B, but in planta only with CSN5B, which targets CYT1 for degradation in the dark by the 26S proteasome. Forms homodimers in the unliganded structure. The product-bound structure is composed of six dimers that form a dodecameric assembly.

Its subcellular location is the cytoplasm. It localises to the nucleus. It carries out the reaction alpha-D-mannose 1-phosphate + GTP + H(+) = GDP-alpha-D-mannose + diphosphate. It functions in the pathway nucleotide-sugar biosynthesis; GDP-alpha-D-mannose biosynthesis; GDP-alpha-D-mannose from alpha-D-mannose 1-phosphate (GTP route): step 1/1. In terms of biological role, essential protein during embryogenesis. Catalyzes a reaction of the Smirnoff-Wheeler pathway, the major route to ascorbate biosynthesis in plants. Plays an essential role in plant growth and development and cell-wall architecture. Provides GDP-mannose, used for cell wall carbohydrate biosynthesis, protein N-glycosylation, as well as for the biosynthesis of the antioxidant ascorbate. In Arabidopsis thaliana (Mouse-ear cress), this protein is Mannose-1-phosphate guanylyltransferase 1.